We begin with the raw amino-acid sequence, 288 residues long: Homoserine kinase (288 aa).

Residue 79–89 (PLARGLGSSSS) participates in ATP binding.

This sequence belongs to the GHMP kinase family. Homoserine kinase subfamily.

Its subcellular location is the cytoplasm. It carries out the reaction L-homoserine + ATP = O-phospho-L-homoserine + ADP + H(+). The protein operates within amino-acid biosynthesis; L-threonine biosynthesis; L-threonine from L-aspartate: step 4/5. Functionally, catalyzes the ATP-dependent phosphorylation of L-homoserine to L-homoserine phosphate. This is Homoserine kinase from Streptococcus gordonii (strain Challis / ATCC 35105 / BCRC 15272 / CH1 / DL1 / V288).